The sequence spans 137 residues: Large ribosomal subunit protein uL16 (137 aa).

The tract at residues 1–20 (MLQPSNRKYRKDFKGRNRGV) is disordered. Residues 7 to 17 (RKYRKDFKGRN) show a composition bias toward basic residues.

This sequence belongs to the universal ribosomal protein uL16 family. As to quaternary structure, part of the 50S ribosomal subunit.

In terms of biological role, binds 23S rRNA and is also seen to make contacts with the A and possibly P site tRNAs. The sequence is that of Large ribosomal subunit protein uL16 from Coxiella burnetii (strain CbuK_Q154) (Coxiella burnetii (strain Q154)).